The following is a 314-amino-acid chain: Probable RuBisCO transcriptional regulator (314 aa).

The HTH lysR-type domain maps to 6-63 (FTLDQLKIIKTIHREGSFKTAAKKLYISQPAVSRQVQNLERQLNTPIFYRDKRKARLT). The segment at residues 23–42 (FKTAAKKLYISQPAVSRQVQ) is a DNA-binding region (H-T-H motif).

It belongs to the LysR transcriptional regulatory family.

It is found in the plastid. Its subcellular location is the chloroplast. Its function is as follows. Trans-acting transcriptional regulator of RuBisCO genes (rbcL and rbcS) expression. The chain is Probable RuBisCO transcriptional regulator (rbcR) from Emiliania huxleyi (Coccolithophore).